Consider the following 41-residue polypeptide: Photosystem I reaction center subunit IX (41 aa).

The chain crosses the membrane as a helical span at residues 7 to 27; that stretch reads YLSTAPVLTLVSLTAVAGLLI.

This sequence belongs to the PsaJ family.

It localises to the plastid. The protein resides in the chloroplast thylakoid membrane. Functionally, may help in the organization of the PsaE and PsaF subunits. The sequence is that of Photosystem I reaction center subunit IX from Chlorella vulgaris (Green alga).